Here is a 234-residue protein sequence, read N- to C-terminus: Small ribosomal subunit protein uS3 (234 aa).

Positions 39-107 (IRKMLKERLK…EVHLNLVEVR (69 aa)) constitute a KH type-2 domain. The span at 215–227 (QERRLQESGEQRA) shows a compositional bias: basic and acidic residues. A disordered region spans residues 215–234 (QERRLQESGEQRARSGRQAA).

It belongs to the universal ribosomal protein uS3 family. Part of the 30S ribosomal subunit. Forms a tight complex with proteins S10 and S14.

Its function is as follows. Binds the lower part of the 30S subunit head. Binds mRNA in the 70S ribosome, positioning it for translation. The chain is Small ribosomal subunit protein uS3 from Maricaulis maris (strain MCS10) (Caulobacter maris).